The following is a 481-amino-acid chain: Glutamate--tRNA ligase (481 aa).

The short motif at 9–19 (PSPTGNLHIGT) is the 'HIGH' region element. The short motif at 247–251 (KLSKR) is the 'KMSKS' region element. An ATP-binding site is contributed by lysine 250.

Belongs to the class-I aminoacyl-tRNA synthetase family. Glutamate--tRNA ligase type 1 subfamily. Monomer.

It localises to the cytoplasm. It catalyses the reaction tRNA(Glu) + L-glutamate + ATP = L-glutamyl-tRNA(Glu) + AMP + diphosphate. Functionally, catalyzes the attachment of glutamate to tRNA(Glu) in a two-step reaction: glutamate is first activated by ATP to form Glu-AMP and then transferred to the acceptor end of tRNA(Glu). In Nostoc punctiforme (strain ATCC 29133 / PCC 73102), this protein is Glutamate--tRNA ligase.